A 352-amino-acid polypeptide reads, in one-letter code: Histidinol-phosphate aminotransferase (352 aa).

Lysine 221 is subject to N6-(pyridoxal phosphate)lysine.

It belongs to the class-II pyridoxal-phosphate-dependent aminotransferase family. Histidinol-phosphate aminotransferase subfamily. In terms of assembly, homodimer. The cofactor is pyridoxal 5'-phosphate.

The enzyme catalyses L-histidinol phosphate + 2-oxoglutarate = 3-(imidazol-4-yl)-2-oxopropyl phosphate + L-glutamate. It functions in the pathway amino-acid biosynthesis; L-histidine biosynthesis; L-histidine from 5-phospho-alpha-D-ribose 1-diphosphate: step 7/9. This Staphylococcus aureus (strain Mu3 / ATCC 700698) protein is Histidinol-phosphate aminotransferase.